Reading from the N-terminus, the 451-residue chain is uncharacterized protein (451 aa).

11 helical membrane passes run 13 to 33, 41 to 61, 97 to 117, 142 to 162, 174 to 194, 217 to 237, 255 to 275, 299 to 319, 345 to 365, 381 to 401, and 429 to 449; these read IGFV…WKFP, GGAF…PLLV, ACFL…LYIV, NPVQ…LVVA, AVMM…SLTL, ILFA…VMVT, IVLM…PAVF, LPFG…AALT, WTSG…YGVL, FTVS…FIPL, and LLRF…IGIL.

This sequence belongs to the sodium:neurotransmitter symporter (SNF) (TC 2.A.22) family.

It is found in the cell membrane. In terms of biological role, putative sodium-dependent transporter. This is an uncharacterized protein from Bacillus subtilis (strain 168).